A 170-amino-acid chain; its full sequence is Acireductone dioxygenase (170 aa).

The Fe(2+) site is built by His99, His101, Glu105, and His144. 4 residues coordinate Ni(2+): His99, His101, Glu105, and His144.

The protein belongs to the acireductone dioxygenase (ARD) family. As to quaternary structure, monomer. Fe(2+) is required as a cofactor. The cofactor is Ni(2+).

It catalyses the reaction 1,2-dihydroxy-5-(methylsulfanyl)pent-1-en-3-one + O2 = 3-(methylsulfanyl)propanoate + CO + formate + 2 H(+). It carries out the reaction 1,2-dihydroxy-5-(methylsulfanyl)pent-1-en-3-one + O2 = 4-methylsulfanyl-2-oxobutanoate + formate + 2 H(+). It participates in amino-acid biosynthesis; L-methionine biosynthesis via salvage pathway; L-methionine from S-methyl-5-thio-alpha-D-ribose 1-phosphate: step 5/6. Catalyzes 2 different reactions between oxygen and the acireductone 1,2-dihydroxy-3-keto-5-methylthiopentene (DHK-MTPene) depending upon the metal bound in the active site. Fe-containing acireductone dioxygenase (Fe-ARD) produces formate and 2-keto-4-methylthiobutyrate (KMTB), the alpha-ketoacid precursor of methionine in the methionine recycle pathway. Ni-containing acireductone dioxygenase (Ni-ARD) produces methylthiopropionate, carbon monoxide and formate, and does not lie on the methionine recycle pathway. The sequence is that of Acireductone dioxygenase from Bacillus cereus (strain ZK / E33L).